The sequence spans 135 residues: Lysozyme 2 (135 aa).

The N-terminal stretch at 1–18 (MNFLILFCVVASASVVYS) is a signal peptide. The I-type lysozyme domain maps to 19-135 (SISDQCLRCI…WRLVQAKGCS (117 aa)). Intrachain disulfides connect C24/C100, C29/C35, C40/C49, C62/C82, C72/C78, and C96/C114. E32 serves as the catalytic Proton donor. D43 serves as the catalytic Nucleophile. Residue 55–61 (KQGYWTD) participates in substrate binding. Substrate is bound by residues Y86 and 107-109 (HNG).

As to expression, expressed in the epithelia of the basophil cells in the digestive tubules, but not in the epithelial cells lining the digestive ducts and stomach. Expressed at a much lower level in the style sac-midgut tissues. No expression detected in mantle, gills, labial palps or hemocytes.

It is found in the secreted. The catalysed reaction is Hydrolysis of (1-&gt;4)-beta-linkages between N-acetylmuramic acid and N-acetyl-D-glucosamine residues in a peptidoglycan and between N-acetyl-D-glucosamine residues in chitodextrins.. With respect to regulation, activity decreased by 80% by addition of 0.01 M calcium, zinc or magnesium. Activity only decreased by 17% by addition of ammonium, and by 2% by addition of sodium. Its function is as follows. The main role of this lysozyme is in digestion. Has antibacterial activity against the Gram-positive bacterium P.cerevisiae and the Gram-negative bacteria E.coli and V.vulnificus. Shows some chitinase activity but no isopeptidase activity. The chain is Lysozyme 2 from Crassostrea virginica (Eastern oyster).